The following is a 100-amino-acid chain: Large ribosomal subunit protein uL23 (100 aa).

It belongs to the universal ribosomal protein uL23 family. Part of the 50S ribosomal subunit. Contacts protein L29, and trigger factor when it is bound to the ribosome.

In terms of biological role, one of the early assembly proteins it binds 23S rRNA. One of the proteins that surrounds the polypeptide exit tunnel on the outside of the ribosome. Forms the main docking site for trigger factor binding to the ribosome. The protein is Large ribosomal subunit protein uL23 of Aggregatibacter actinomycetemcomitans (Actinobacillus actinomycetemcomitans).